We begin with the raw amino-acid sequence, 39 residues long: Beta-theraphotoxin-Cm2a (39 aa).

Disulfide bonds link cysteine 7–cysteine 21, cysteine 14–cysteine 26, and cysteine 20–cysteine 33. At phenylalanine 39 the chain carries Phenylalanine amide.

As to expression, expressed by the venom gland.

The protein resides in the secreted. Its function is as follows. Inhibits mammalian voltage-gated sodium channel subtypes Nav1.5/SCN5A and Nav1.8/SCN10A by shifting the voltage dependence of channel activation to more depolarized potentials and by blocking the inward component of the sodium current. In vivo, this toxin causes erect, elevated tail, initial partial ataxia, followed by recovery over approximately 1 hour after injection and the progressive development of shaking. Although paralysis subsides, the body tremors never cease and persist until the end of the experiment. The sequence is that of Beta-theraphotoxin-Cm2a from Ceratogyrus marshalli (Straighthorned baboon tarantula).